Here is a 196-residue protein sequence, read N- to C-terminus: Peptidyl-tRNA hydrolase (196 aa).

A tRNA-binding site is contributed by Tyr17. His22 (proton acceptor) is an active-site residue. 3 residues coordinate tRNA: Phe68, Asn70, and Asn116.

It belongs to the PTH family. As to quaternary structure, monomer.

It is found in the cytoplasm. It carries out the reaction an N-acyl-L-alpha-aminoacyl-tRNA + H2O = an N-acyl-L-amino acid + a tRNA + H(+). In terms of biological role, hydrolyzes ribosome-free peptidyl-tRNAs (with 1 or more amino acids incorporated), which drop off the ribosome during protein synthesis, or as a result of ribosome stalling. Functionally, catalyzes the release of premature peptidyl moieties from peptidyl-tRNA molecules trapped in stalled 50S ribosomal subunits, and thus maintains levels of free tRNAs and 50S ribosomes. The polypeptide is Peptidyl-tRNA hydrolase (Yersinia pestis bv. Antiqua (strain Antiqua)).